Here is a 298-residue protein sequence, read N- to C-terminus: MDSPFKPDVVRGQVALITGGGSGIGFEISSQFGKHGASIAIMGRRKQVLDDAVSALRSLGIQAIGLEGDVRKQEDARRVVEATFQHFGKLDILVNAAAGNFLAAAEDLSPNGFRTVLDIDAVGTFNMCHAALKYLKKGAPGRDSSSGGGSIINISATLHYTASWYQIHVSAAKAAVDATTRNLALEWGTDYDIRVNGIAPGPIGGTPGMSKLVPEEIENKTREYMPLYKVGEKWDIAMAALYLSCDSGKYVSGLTMVVDGGLWLSKPRHLPKEAVKQLSRAVEKRSRAKPVGLPTSKL.

An NADP(+)-binding site is contributed by 19-24 (GGGSGI). Residue Arg44 participates in substrate binding. Residue Asp69 coordinates NADP(+). Substrate is bound by residues Arg71, Phe101, and 109–111 (SPN). NADP(+) contacts are provided by residues Lys173 and 200-206 (PGPIGGT). The segment at 279–298 (SRAVEKRSRAKPVGLPTSKL) is disordered. Positions 296-298 (SKL) match the Microbody targeting signal motif.

Belongs to the short-chain dehydrogenases/reductases (SDR) family. 2,4-dienoyl-CoA reductase subfamily.

The protein resides in the peroxisome. The enzyme catalyses a (2E,4Z)-dienoyl-CoA + NADPH + H(+) = a 4,5-saturated-(3E)-enoyl-CoA + NADP(+). The catalysed reaction is a (2E,4E)-dienoyl-CoA + NADPH + H(+) = a 4,5-saturated-(3E)-enoyl-CoA + NADP(+). Its function is as follows. Auxiliary enzyme of beta-oxidation. Participates in the degradation of unsaturated fatty enoyl-CoA esters having double bonds in both even- and odd-numbered positions in peroxisome. Catalyzes the NADP-dependent reduction of 2,4-dienoyl-CoA to yield trans-3-enoyl-CoA. In Arabidopsis thaliana (Mouse-ear cress), this protein is Peroxisomal 2,4-dienoyl-CoA reductase [(3E)-enoyl-CoA-producing].